The following is a 779-amino-acid chain: MEGSRPRSSLSLASSASTISSLSSLSPKKPTRAVNKIHAFGKRGNALRRDPNLPVHIRGWLHKQDSSGLRLWKRRWFVLSGHCLFYYKDSREESVLGSVLLPSYNIRPDGPGAPRGRRFTFTAEHPGMRTYVLAADTLEDLRGWLRALGRASRAEGDDYGQPRSPARPQPGEGPGGPGGPPEVSRGEEGRISESPEVTRLSRGRGRPRLLTPSPTTDLHSGLQMRRARSPDLFTPLSRPPSPLSLPRPRSAPARRPPAPSGDTAPPARPHTPLSRIDVRPPLDWGPQRQTLSRPPTPRRGPPSEAGGGKPPRSPQHWSQEPRTQAHSGSPTYLQLPPRPPGTRASMVLLPGPPLESTFHQSLETDTLLTKLCGQDRLLRRLQEEIDQKQEEKEQLEAALELTRQQLGQATREAGAPGRAWGRQRLLQDRLVSVRATLCHLTQERERVWDTYSGLEQELGTLRETLEYLLHLGSPQDRVSAQQQLWMVEDTLAGLGGPQKPPPHTEPDSPSPVLQGEESSERESLPESLELSSPRSPETDWGRPPGGDKDLASPHLGLGSPRVSRASSPEGRHLPSPQLGTKAPVARPRMSAQEQLERMRRNQECGRPFPRPTSPRLLTLGRTLSPARRQPDVEQRPVVGHSGAQKWLRSSGSWSSPRNTTPYLPTSEGHRERVLSLSQALATEASQWHRMMTGGNLDSQGDPLPGVPLPPSDPTRQETPPPRSPPVANSGSTGFSRRGSGRGGGPTPWGPAWDAGIAPPVLPQDEGAWPLRVTLLQSSF.

The PH domain occupies 54-153 (PVHIRGWLHK…WLRALGRASR (100 aa)). 3 disordered regions span residues 152-352 (SRAE…LPGP), 492-670 (AGLG…EGHR), and 691-764 (MTGG…LPQD). Ser-164 bears the Phosphoserine mark. Residues 184–193 (SRGEEGRISE) show a composition bias toward basic and acidic residues. A compositionally biased stretch (polar residues) spans 315-332 (QHWSQEPRTQAHSGSPTY). Low complexity predominate over residues 525-535 (PESLELSSPRS). Basic and acidic residues predominate over residues 536–551 (PETDWGRPPGGDKDLA). Ser-559 carries the post-translational modification Phosphoserine. Residues 594 to 603 (QLERMRRNQE) show a composition bias toward basic and acidic residues. The segment covering 647-663 (LRSSGSWSSPRNTTPYL) has biased composition (polar residues). Over residues 704–724 (PGVPLPPSDPTRQETPPPRSP) the composition is skewed to pro residues.

In terms of tissue distribution, highly expressed in melanoma. Detected at low levels in heart, skeletal muscle, kidney, liver and small intestine.

The protein localises to the cytoplasm. The protein resides in the membrane. In terms of biological role, binds specifically to phosphatidylinositol 3-phosphate (PtdIns3P), but not to other phosphoinositides. The protein is Pleckstrin homology domain-containing family A member 4 (PLEKHA4) of Homo sapiens (Human).